The primary structure comprises 327 residues: Thiamine-monophosphate kinase (327 aa).

Aspartate 30, serine 45, serine 46, and aspartate 47 together coordinate Mg(2+). Histidine 54 lines the substrate pocket. Mg(2+) is bound at residue aspartate 76. ATP contacts are provided by residues tyrosine 106, 123 to 124, and arginine 149; that span reads GD. Position 124 (aspartate 124) interacts with Mg(2+). Residue aspartate 221 participates in Mg(2+) binding. Serine 223 provides a ligand contact to ATP. Aspartate 224 contacts Mg(2+). Residues glutamate 268 and phenylalanine 321 each contribute to the substrate site.

This sequence belongs to the thiamine-monophosphate kinase family.

It catalyses the reaction thiamine phosphate + ATP = thiamine diphosphate + ADP. It participates in cofactor biosynthesis; thiamine diphosphate biosynthesis; thiamine diphosphate from thiamine phosphate: step 1/1. In terms of biological role, catalyzes the ATP-dependent phosphorylation of thiamine-monophosphate (TMP) to form thiamine-pyrophosphate (TPP), the active form of vitamin B1. This chain is Thiamine-monophosphate kinase, found in Synechococcus elongatus (strain ATCC 33912 / PCC 7942 / FACHB-805) (Anacystis nidulans R2).